The chain runs to 269 residues: MVQPSPAPVVTITPAPAPAAPSHPHGWKRKQEFKALHLALAFLTTLPLPHVRDVQPGDFARASAYYPLAGYAVGGLVAGLLYLNVPLPPGVVAALGVGLWLGLTGMLHFDGLVDSADALFAMKSPEQRLDILKDVHVGAFGLATGVLALLLLWSLLGAGLPWYAPLVAAVVARMVVLMPMNAYPAARQESLGAQSRQGRWGLAFLFALPALLLPHAWLAALVALLGVTLVAAWAARRLGGGLSGDVYGLLIVVAELLVLGFYGWGFTPL.

6 helical membrane passes run 63–83 (SAYY…LLYL), 87–107 (LPPG…TGML), 137–157 (VGAF…SLLG), 158–178 (AGLP…VVLM), 202–222 (LAFL…AALV), and 246–266 (VYGL…GWGF).

Belongs to the CobS family. It depends on Mg(2+) as a cofactor.

It is found in the cell membrane. It catalyses the reaction alpha-ribazole + adenosylcob(III)inamide-GDP = adenosylcob(III)alamin + GMP + H(+). The enzyme catalyses alpha-ribazole 5'-phosphate + adenosylcob(III)inamide-GDP = adenosylcob(III)alamin 5'-phosphate + GMP + H(+). It participates in cofactor biosynthesis; adenosylcobalamin biosynthesis; adenosylcobalamin from cob(II)yrinate a,c-diamide: step 7/7. Its function is as follows. Joins adenosylcobinamide-GDP and alpha-ribazole to generate adenosylcobalamin (Ado-cobalamin). Also synthesizes adenosylcobalamin 5'-phosphate from adenosylcobinamide-GDP and alpha-ribazole 5'-phosphate. The polypeptide is Adenosylcobinamide-GDP ribazoletransferase (Deinococcus radiodurans (strain ATCC 13939 / DSM 20539 / JCM 16871 / CCUG 27074 / LMG 4051 / NBRC 15346 / NCIMB 9279 / VKM B-1422 / R1)).